Consider the following 1820-residue polypeptide: MPGARSEAGGVDNPLVLDSSDSDDNLSGLPLNGRVKRIDGNDRSYKKKSLTSMRKSTVVDLTLSDSDEAVESVNLLPGSSSTPDRAAQAGISDKQPSLRRRPRPFMSIADSSSPPENQNVISFLGNHSQEIGELPSPPLVEDRAAPNKMELGGENIAGQNNEANAAQAAVPVSGTPSLTLSSNRPQSVSGAQLVVASSSRSAINSPPRRTPSIPQQSPSSRATPCRSASIASSRSRPPTPPLPATQSTPVTVSRRLASPILSPVQAVSSAIISPTIPSIPSHASLSDPTILSPPSATSAPPNSPIPSTSTTVQTPAAALTYARPSTSAAPLPVMPISVTPATTSPAGPGPSALQSASEATKSSDQKESPRKTNSKQPSSPSSTHGRWTDTRLFHTPSNLSATSGKSSAASSRSKSRAPLSSRAAMSDNVAGPSKTTSVSSTHPPSRASPSSLPSQSQRQVHPRPPSRDGVGKREKKSKTLSSGTGQSTPSKFSLPTSDVASNQKNKSTGLNALPKKPSSTPTSSIPQRTSTLATAMAIRPFVRSPTPPSPQSSSEASRSIQTSRGAVKAAQNQDKIHPLSTALSISSHSREATTKATTLFHTTSSPPSPSQSTSAPTKSHVVWNAQKLGTTVLSSERIHLSRGKSQTSDSVVAPAASQTAASLSYPAGTSGGAREADKKAVETSFHAGPSSADFEAFVQPSTSAIAPTTVRPSVAPPEDAPVLKSGSIIHPLFRAASAIGDQNAFTKTEAVGDVLSQGSKGRASSPRITTTGAVSHLAPHVDLGSKIKPTAAPSLFASGVTTKNVDDQDSAQPQNQTPLPSAISVSSKKNHGSLSKESSIKSAASFISSSSTLGDSVSGLGRKSHHKSTQSMPQSPLPTTNTNNSSGIEVNSWLNPQPFGPSFAASHLSIHAKKKWKERERGKEREKEKVREKEKAEEENEQLRQRRIADLEKLSANLELYKRRMDVESRTRSIPRADGETRKRPPSPGISVSTDAEVRVVKRSKPTWAIAPEGGHVAPAMEKESANVNKKAADAIKINHQPASSYAPAFATPASPAKATRTPLSVTAGLGPPVNSSSSTSTPSLLSRSINLGILRDKPKDHMDDDDGDDSAGGLPVRKTGKNGAVEEQVEQVRLDLDDVSIHGSSPAAPLSIFTSRFRDVSITPSRIQKTLEESDNDVPIQRYAVKVNGKQKAQRSKDKSYGSESENDVPLNWPSRKGKGRTAPEPQDSSETQRDDDDVNLGSGDGEERPSDDDSIPVPPAPLFKDRTAHVRQPLQTLFKGGIVAKHSYQRPLAKASAVSPVPSANRPSPAPSAKADLLPQKRKRRLKKITSQQWQHIAQNSLSDVDDLLGESSKKRLSPENAEKLGADLSKLTRPRVFSIVSRSEPRTKREPIEEDNNEYFTDSDSHTSDVALFSQHPDPPPPPERIREAKRNFDTRNIDPWNRQKHTFRSNPALHRAIFEAYIMQSTSMEESGGDDIKVTNDVDADGGPPDFEFVYSDTMLYPDGIPPPELGLGCDCDGPCDPDSETCTCVKRQELYFYDLGLKGFAYDENGKIRENSASIWECNELCGCPPECMNRVIQRGRARDTGIEIFKTKEKGWGIRARSFIPSGTYIGSYTGELIREAESERRGVTYTAIGRTYVFDLDGWQIRHPPKGLEKIDKRAAELAEAVKMRARAAMRESQEDAYNAYSVDAFHYGNFTRYFNHSCDPNLAITQAYVKDFHPERPLLVIFTRRDIKKHEELCISYKGIPDDDDIPSPEPVKKKKGGKGKKQMSKTSASAHPPEMTALNSDKGLVEVKDICRCGAKNCDGRMFNYGP.

Disordered regions lie at residues 1–54 (MPGA…TSMR), 74–251 (NLLP…TPVT), 284–618 (SLSD…APTK), 634–681 (SSER…KKAV), 804–836 (NVDDQDSAQPQNQTPLPSAISVSSKKNHGSLSK), 850–893 (SSTL…VNSW), 911–944 (HAKKKWKERERGKEREKEKVREKEKAEEENEQLR), 966–996 (DVESRTRSIPRADGETRKRPPSPGISVSTDA), 1063–1126 (PLSV…NGAV), 1183–1270 (RYAV…DRTA), 1296–1335 (KASAVSPVPSANRPSPAPSAKADLLPQKRKRRLKKITSQQ), and 1385–1407 (RSEPRTKREPIEEDNNEYFTDSD). Positions 11–31 (VDNPLVLDSSDSDDNLSGLPL) are enriched in low complexity. Over residues 109-129 (ADSSSPPENQNVISFLGNHSQ) the composition is skewed to polar residues. Over residues 152-169 (GGENIAGQNNEANAAQAA) the composition is skewed to low complexity. Composition is skewed to polar residues over residues 174-204 (GTPSLTLSSNRPQSVSGAQLVVASSSRSAIN) and 212-222 (SIPQQSPSSRA). Composition is skewed to low complexity over residues 226-236 (RSASIASSRSR), 284-311 (SLSDPTILSPPSATSAPPNSPIPSTSTT), and 339-352 (TPATTSPAGPGPSA). Residues 361–370 (KSSDQKESPR) show a composition bias toward basic and acidic residues. Polar residues predominate over residues 374 to 385 (SKQPSSPSSTHG). Low complexity predominate over residues 400–424 (SATSGKSSAASSRSKSRAPLSSRAA). Polar residues predominate over residues 433-442 (SKTTSVSSTH). Residues 443-459 (PPSRASPSSLPSQSQRQ) show a composition bias toward low complexity. Residues 479–510 (TLSSGTGQSTPSKFSLPTSDVASNQKNKSTGL) are compositionally biased toward polar residues. Low complexity-rich tracts occupy residues 514–531 (PKKPSSTPTSSIPQRTST), 551–563 (QSSSEASRSIQTS), and 594–618 (TKATTLFHTTSSPPSPSQSTSAPTK). Polar residues-rich tracts occupy residues 643–662 (GKSQTSDSVVAPAASQTAAS) and 810–827 (SAQPQNQTPLPSAISVSS). Positions 850 to 861 (SSTLGDSVSGLG) are enriched in low complexity. A compositionally biased stretch (polar residues) spans 869-893 (TQSMPQSPLPTTNTNNSSGIEVNSW). Composition is skewed to basic and acidic residues over residues 917–944 (KERERGKEREKEKVREKEKAEEENEQLR) and 966–983 (DVESRTRSIPRADGETRK). The span at 1076 to 1089 (SSSSTSTPSLLSRS) shows a compositional bias: low complexity. Low complexity predominate over residues 1296–1320 (KASAVSPVPSANRPSPAPSAKADLL). Residues 1516–1585 (LGCDCDGPCD…ECMNRVIQRG (70 aa)) enclose the Pre-SET domain. The Zn(2+) site is built by C1518, C1520, C1524, C1531, C1533, C1567, C1571, C1573, and C1577. Residues 1590-1750 (TGIEIFKTKE…KHEELCISYK (161 aa)) form the SET domain. S-adenosyl-L-methionine-binding positions include 1600-1602 (KGW), Y1643, R1704, and 1707-1708 (NH). Residue C1710 participates in Zn(2+) binding. A disordered region spans residues 1756–1794 (DDIPSPEPVKKKKGGKGKKQMSKTSASAHPPEMTALNSD). A compositionally biased stretch (basic residues) spans 1765–1776 (KKKKGGKGKKQM). Residues 1800–1816 (VKDICRCGAKNCDGRMF) enclose the Post-SET domain. The Zn(2+) site is built by C1804, C1806, and C1811.

This sequence belongs to the class V-like SAM-binding methyltransferase superfamily. Histone-lysine methyltransferase family. Suvar3-9 subfamily.

It localises to the nucleus. The protein resides in the chromosome. The enzyme catalyses N(6)-methyl-L-lysyl(9)-[histone H3] + S-adenosyl-L-methionine = N(6),N(6)-dimethyl-L-lysyl(9)-[histone H3] + S-adenosyl-L-homocysteine + H(+). The catalysed reaction is L-lysyl(9)-[histone H3] + S-adenosyl-L-methionine = N(6)-methyl-L-lysyl(9)-[histone H3] + S-adenosyl-L-homocysteine + H(+). Its function is as follows. Histone methyltransferase that specifically dimethylates histone H3 to form H3K9me2. H3K9me2 represents a specific tag for epigenetic transcriptional repression by recruiting HP1 proteins to methylated histones. Mainly functions in heterochromatin regions, thereby playing a central role in the establishment of constitutive heterochromatin at centromeric regions. This is Histone-lysine N-methyltransferase, H3 lysine-9 specific from Cryptococcus neoformans var. grubii serotype A (strain H99 / ATCC 208821 / CBS 10515 / FGSC 9487) (Filobasidiella neoformans var. grubii).